The primary structure comprises 1220 residues: Plasma membrane calcium-transporting ATPase 1 (1220 aa).

Position 2 is an N-acetylglycine (Gly-2). The Cytoplasmic segment spans residues 2–105 (GDMANNSVAY…KTFLQLVWEA (104 aa)). Phosphoserine occurs at positions 8 and 17. Residues 106 to 126 (LQDVTLIILEIAAIVSLGLSF) traverse the membrane as a helical segment. Residues 127–154 (YQPPEGDNALCGEVSVGEEEGEGETGWI) lie on the Extracellular side of the membrane. The chain crosses the membrane as a helical span at residues 155–175 (EGAAILLSVVCVVLVTAFNDW). Residues 176–366 (SKEKQFRGLQ…KEKSVLQGKL (191 aa)) lie on the Cytoplasmic side of the membrane. A disordered region spans residues 297 to 356 (EEEKKDEKKKEKKNKKQDGAIENRNKAKAQDGAAMEMQPLKSEEGGDGDEKDKKKANLPK). Composition is skewed to basic and acidic residues over residues 312 to 325 (KQDG…KAKA) and 337 to 356 (KSEE…NLPK). At Ser-338 the chain carries Phosphoserine. The chain crosses the membrane as a helical span at residues 367 to 386 (TKLAVQIGKAGLLMSAITVI). Over 387 to 418 (ILVLYFVIDTFWVQKRPWLAECTPIYIQYFVK) the chain is Extracellular. A helical membrane pass occupies residues 419-439 (FFIIGVTVLVVAVPEGLPLAV). Residues 440-855 (TISLAYSVKK…RNVYDSISKF (416 aa)) are Cytoplasmic-facing. The active-site 4-aspartylphosphate intermediate is the Asp-475. Asp-475, Thr-477, and Asp-797 together coordinate Mg(2+). A helical transmembrane segment spans residues 856–876 (LQFQLTVNVVAVIVAFTGACI). Topologically, residues 877 to 882 (TQDSPL) are extracellular. The helical transmembrane segment at 883-903 (KAVQMLWVNLIMDTLASLALA) threads the bilayer. Residues 904–927 (TEPPTESLLLRKPYGRNKPLISRT) lie on the Cytoplasmic side of the membrane. The chain crosses the membrane as a helical span at residues 928–948 (MMKNILGHAFYQLVVVFTLLF). Residues 949–971 (AGEKFFDIDSGRNAPLHAPPSEH) are Extracellular-facing. The helical transmembrane segment at 972 to 991 (YTIVFNTFVLMQLFNEINAR) threads the bilayer. The Cytoplasmic segment spans residues 992-1005 (KIHGERNVFEGIFN). Residues 1006-1027 (NAIFCTIVLGTFVVQIIIVQFG) form a helical membrane-spanning segment. The Extracellular portion of the chain corresponds to 1028-1039 (GKPFSCSELSIE). A helical membrane pass occupies residues 1040–1060 (QWLWSIFLGMGTLLWGQLIST). The Cytoplasmic segment spans residues 1061–1220 (IPTSRLKFLK…SPLHSLETSL (160 aa)). Residues 1100 to 1117 (LRRGQILWFRGLNRIQTQ) form a calmodulin-binding subdomain A region. A Phosphothreonine; by PKC modification is found at Thr-1116. Residues 1118–1220 (IRVVNAFRSS…SPLHSLETSL (103 aa)) form a required for basolateral membrane targeting region. Phosphoserine is present on residues Ser-1140 and Ser-1155. Residues 1162–1220 (IDDTDAEDDAPTKRNSSPPPSPNKNNNAVDSGIHLTIEMNKSATSSSPGSPLHSLETSL) are disordered. Thr-1165 carries the phosphothreonine modification. A Phosphoserine; by PKA modification is found at Ser-1177. Ser-1178 and Ser-1182 each carry phosphoserine. Positions 1200 to 1220 (MNKSATSSSPGSPLHSLETSL) are enriched in polar residues.

It belongs to the cation transport ATPase (P-type) (TC 3.A.3) family. Type IIB subfamily. Monomer. Dimer. Oligomer. Calmodulin binding. Interacts with PDZD11. Interacts with SLC35G1 and STIM1. Interacts with YWHAE; interacts with the monomeric and dimeric forms of the YWHAE but prefer the monomer form; this interaction inhibits calcium-transporting ATPase activity. Interacts with NPTN; this interaction stabilizes ATP2B1 and increases ATPase activity; this interaction controls T cell calcium homeostasis following T cell activation. Interacts with EPB41; regulates small intestinal calcium absorption through regulation of membrane expression of ATP2B1. Isoform B is ubiquitously expressed. Isoforms A and E have only been found in brain cortex. Isoform C is found in brain cortex, skeletal muscle and heart muscle. Isoform D has only been found in fetal skeletal muscle. Isoform K has been found in small intestine and liver. Isoform B is expressed in hair cells of inner ear.

Its subcellular location is the cell membrane. It is found in the basolateral cell membrane. The protein resides in the synapse. The protein localises to the presynaptic cell membrane. It localises to the cytoplasmic vesicle. Its subcellular location is the secretory vesicle. It is found in the synaptic vesicle membrane. It catalyses the reaction Ca(2+)(in) + ATP + H2O = Ca(2+)(out) + ADP + phosphate + H(+). In terms of biological role, catalyzes the hydrolysis of ATP coupled with the transport of calcium from the cytoplasm to the extracellular space thereby maintaining intracellular calcium homeostasis. Plays a role in blood pressure regulation through regulation of intracellular calcium concentration and nitric oxide production leading to regulation of vascular smooth muscle cells vasoconstriction. Positively regulates bone mineralization through absorption of calcium from the intestine. Plays dual roles in osteoclast differentiation and survival by regulating RANKL-induced calcium oscillations in preosteoclasts and mediating calcium extrusion in mature osteoclasts. Regulates insulin sensitivity through calcium/calmodulin signaling pathway by regulating AKT1 activation and NOS3 activation in endothelial cells. May play a role in synaptic transmission by modulating calcium and proton dynamics at the synaptic vesicles. The sequence is that of Plasma membrane calcium-transporting ATPase 1 from Rattus norvegicus (Rat).